Here is a 266-residue protein sequence, read N- to C-terminus: MSSPGEFYNSLPPITKAYGTLCFFTTVATQLGLVAPVHIALIPELVLKQFQIWRLITNLFFLGGFSINFGIRLLMIARYGVQLEKGPFERRTADFLWMMIFGSFTLLVLSVIPFFWTPFLGVSLVFMLLYLWSREFPNANISLYGLVTLKAFYLPWAMLALDVIFGSPIMPDLLGIIAGHLYYFLTVLHPLATGKNYLKTPKWVNKIVARWRIGAPVASVRQAGGVGAAGPGAGGGVGGGGAYSSARAPPESSNTAFRGRSYRLTD.

The Cytoplasmic segment spans residues 1–20 (MSSPGEFYNSLPPITKAYGT). Residues 21 to 41 (LCFFTTVATQLGLVAPVHIAL) traverse the membrane as a helical segment. The Lumenal segment spans residues 42–55 (IPELVLKQFQIWRL). A helical membrane pass occupies residues 56 to 76 (ITNLFFLGGFSINFGIRLLMI). The Cytoplasmic portion of the chain corresponds to 77–94 (ARYGVQLEKGPFERRTAD). Residues 95 to 115 (FLWMMIFGSFTLLVLSVIPFF) traverse the membrane as a helical segment. The Lumenal segment spans residues 116–156 (WTPFLGVSLVFMLLYLWSREFPNANISLYGLVTLKAFYLPW). Residues 157–177 (AMLALDVIFGSPIMPDLLGII) form a helical membrane-spanning segment. Over 178-266 (AGHLYYFLTV…FRGRSYRLTD (89 aa)) the chain is Cytoplasmic. Residues 235–266 (GGVGGGGAYSSARAPPESSNTAFRGRSYRLTD) are disordered.

The protein belongs to the derlin family.

Its subcellular location is the endoplasmic reticulum membrane. Its function is as follows. May be involved in the degradation process of specific misfolded endoplasmic reticulum (ER) luminal proteins. This is Derlin-1 (DER1) from Arabidopsis thaliana (Mouse-ear cress).